The following is a 572-amino-acid chain: Proline--tRNA ligase (572 aa).

Belongs to the class-II aminoacyl-tRNA synthetase family. ProS type 1 subfamily. As to quaternary structure, homodimer.

The protein localises to the cytoplasm. The catalysed reaction is tRNA(Pro) + L-proline + ATP = L-prolyl-tRNA(Pro) + AMP + diphosphate. Functionally, catalyzes the attachment of proline to tRNA(Pro) in a two-step reaction: proline is first activated by ATP to form Pro-AMP and then transferred to the acceptor end of tRNA(Pro). As ProRS can inadvertently accommodate and process non-cognate amino acids such as alanine and cysteine, to avoid such errors it has two additional distinct editing activities against alanine. One activity is designated as 'pretransfer' editing and involves the tRNA(Pro)-independent hydrolysis of activated Ala-AMP. The other activity is designated 'posttransfer' editing and involves deacylation of mischarged Ala-tRNA(Pro). The misacylated Cys-tRNA(Pro) is not edited by ProRS. This chain is Proline--tRNA ligase, found in Enterobacter sp. (strain 638).